We begin with the raw amino-acid sequence, 143 residues long: Lutropin subunit beta (143 aa).

A signal peptide spans 1-22 (MEMLQGLLLLWLLLLNVGGVWT). 6 cysteine pairs are disulfide-bonded: Cys31–Cys79, Cys45–Cys94, Cys48–Cys132, Cys56–Cys110, Cys60–Cys112, and Cys115–Cys122. A glycan (N-linked (GlcNAc...) asparagine) is linked at Asn35.

It belongs to the glycoprotein hormones subunit beta family. Heterodimer of a common alpha chain and a unique beta chain which confers biological specificity to thyrotropin, lutropin, follitropin and gonadotropin.

Its subcellular location is the secreted. Its function is as follows. Promotes spermatogenesis and ovulation by stimulating the testes and ovaries to synthesize steroids. This Felis catus (Cat) protein is Lutropin subunit beta (LHB).